The primary structure comprises 558 residues: Arginine--tRNA ligase (558 aa).

A 'HIGH' region motif is present at residues 119-129 (ANPNGPLHVGH).

It belongs to the class-I aminoacyl-tRNA synthetase family.

The protein resides in the cytoplasm. It carries out the reaction tRNA(Arg) + L-arginine + ATP = L-arginyl-tRNA(Arg) + AMP + diphosphate. This is Arginine--tRNA ligase from Methanoregula boonei (strain DSM 21154 / JCM 14090 / 6A8).